The following is a 621-amino-acid chain: tRNA uridine 5-carboxymethylaminomethyl modification enzyme MnmG (621 aa).

17 to 22 (GGGHAG) is an FAD binding site. Residue 276-290 (GPRYCPSIEDKIMKF) participates in NAD(+) binding.

The protein belongs to the MnmG family. As to quaternary structure, homodimer. Heterotetramer of two MnmE and two MnmG subunits. The cofactor is FAD.

It is found in the cytoplasm. NAD-binding protein involved in the addition of a carboxymethylaminomethyl (cmnm) group at the wobble position (U34) of certain tRNAs, forming tRNA-cmnm(5)s(2)U34. The polypeptide is tRNA uridine 5-carboxymethylaminomethyl modification enzyme MnmG (Zymomonas mobilis subsp. mobilis (strain ATCC 31821 / ZM4 / CP4)).